The sequence spans 586 residues: Kelch-like protein 7 (586 aa).

In terms of domain architecture, BTB spans 44–111; that stretch reads CDVILTVQER…AYTARISVNS (68 aa). In terms of domain architecture, BACK spans 146 to 248; that stretch reads CLGISVLAEC…SKNFLSKTVQ (103 aa). Kelch repeat units lie at residues 294-336, 337-382, 383-430, 431-481, 483-528, and 530-575; these read RIAL…FWDN, VVYI…AAEG, KIYT…EANG, LIYV…FVKD, IFAV…AVGS, and IYVL…CVVD.

As to quaternary structure, homodimer. Component of the BCR(KLHL7) E3 ubiquitin ligase complex, at least composed of CUL3 and KLHL7 and RBX1.

Its subcellular location is the nucleus. It is found in the cytoplasm. Its pathway is protein modification; protein ubiquitination. Functionally, substrate-specific adapter of a BCR (BTB-CUL3-RBX1) E3 ubiquitin ligase complex. The BCR(KLHL7) complex acts by mediating ubiquitination and subsequent degradation of substrate proteins. Probably mediates 'Lys-48'-linked ubiquitination. In Mus musculus (Mouse), this protein is Kelch-like protein 7 (Klhl7).